The sequence spans 54 residues: H-bracotoxin-Cf4 (54 aa).

A signal peptide spans 1–21; it reads MSKLFIFFLLVALLAFVSSEA. 3 cysteine pairs are disulfide-bonded: cysteine 24–cysteine 39, cysteine 31–cysteine 43, and cysteine 38–cysteine 53.

Expressed by the venom duct.

It localises to the secreted. Its function is as follows. This endoparasitoid wasp peptide has a role in disruption of the cellular host immune response, since it reduces the capacity of D.saccharalis hemocytes to encapsulate foreign bodies. On the other hand, it shows no effect on the humoral immune response, since it has no effect on phenoloxidase activity. The chain is H-bracotoxin-Cf4 from Cotesia flavipes (Parasitic wasp).